A 600-amino-acid polypeptide reads, in one-letter code: Elongation factor 4 (600 aa).

The 183-residue stretch at Ser-5–Glu-187 folds into the tr-type G domain. GTP-binding positions include Asp-17–Thr-22 and Asn-134–Asp-137.

This sequence belongs to the TRAFAC class translation factor GTPase superfamily. Classic translation factor GTPase family. LepA subfamily.

The protein resides in the cell inner membrane. It carries out the reaction GTP + H2O = GDP + phosphate + H(+). Required for accurate and efficient protein synthesis under certain stress conditions. May act as a fidelity factor of the translation reaction, by catalyzing a one-codon backward translocation of tRNAs on improperly translocated ribosomes. Back-translocation proceeds from a post-translocation (POST) complex to a pre-translocation (PRE) complex, thus giving elongation factor G a second chance to translocate the tRNAs correctly. Binds to ribosomes in a GTP-dependent manner. This is Elongation factor 4 from Paramagnetospirillum magneticum (strain ATCC 700264 / AMB-1) (Magnetospirillum magneticum).